A 133-amino-acid polypeptide reads, in one-letter code: Putative esterase STK_17900 (133 aa).

This sequence belongs to the thioesterase PaaI family.

The sequence is that of Putative esterase STK_17900 from Sulfurisphaera tokodaii (strain DSM 16993 / JCM 10545 / NBRC 100140 / 7) (Sulfolobus tokodaii).